We begin with the raw amino-acid sequence, 572 residues long: Proline--tRNA ligase (572 aa).

This sequence belongs to the class-II aminoacyl-tRNA synthetase family. ProS type 1 subfamily. Homodimer.

The protein localises to the cytoplasm. It catalyses the reaction tRNA(Pro) + L-proline + ATP = L-prolyl-tRNA(Pro) + AMP + diphosphate. Functionally, catalyzes the attachment of proline to tRNA(Pro) in a two-step reaction: proline is first activated by ATP to form Pro-AMP and then transferred to the acceptor end of tRNA(Pro). As ProRS can inadvertently accommodate and process non-cognate amino acids such as alanine and cysteine, to avoid such errors it has two additional distinct editing activities against alanine. One activity is designated as 'pretransfer' editing and involves the tRNA(Pro)-independent hydrolysis of activated Ala-AMP. The other activity is designated 'posttransfer' editing and involves deacylation of mischarged Ala-tRNA(Pro). The misacylated Cys-tRNA(Pro) is not edited by ProRS. The polypeptide is Proline--tRNA ligase (Hydrogenovibrio crunogenus (strain DSM 25203 / XCL-2) (Thiomicrospira crunogena)).